The following is a 293-amino-acid chain: Undecaprenyl-diphosphatase (293 aa).

6 helical membrane passes run 74–94, 107–127, 134–154, 209–229, 243–263, and 271–291; these read VLVF…AGVF, WMII…KDLI, MWIT…AEKM, FLLA…DAFA, VGTL…MKFV, and FAAY…LGML.

This sequence belongs to the UppP family.

It is found in the cell membrane. The enzyme catalyses di-trans,octa-cis-undecaprenyl diphosphate + H2O = di-trans,octa-cis-undecaprenyl phosphate + phosphate + H(+). Catalyzes the dephosphorylation of undecaprenyl diphosphate (UPP). Confers resistance to bacitracin. In Corynebacterium glutamicum (strain R), this protein is Undecaprenyl-diphosphatase.